A 175-amino-acid polypeptide reads, in one-letter code: MPVELVDEAGRAVGACPVAEAHRDPGKLHRAFSVLLFDTAGRVLLQQRAAVKTRFPLLWANTCCGHPAPGESVEAAAATRLAEELGVAAGLTEVGVFRYRAADTATGRVEHEWDHVLIGTLDTTPHPDPAEVANLRWVRPAEVRAKLAAEPAAYTPWLAEVLEIADAAYRESAGR.

Mn(2+) contacts are provided by His22 and His29. Residues 27-160 enclose the Nudix hydrolase domain; that stretch reads KLHRAFSVLL…PAAYTPWLAE (134 aa). Cys64 is an active-site residue. Cys64 contributes to the Mg(2+) binding site. Mn(2+) is bound at residue His66. Glu84 lines the Mg(2+) pocket. 2 residues coordinate Mn(2+): Glu110 and Glu112. Glu112 is an active-site residue.

This sequence belongs to the IPP isomerase type 1 family. Mg(2+) serves as cofactor. Mn(2+) is required as a cofactor.

It localises to the cytoplasm. The catalysed reaction is isopentenyl diphosphate = dimethylallyl diphosphate. It participates in isoprenoid biosynthesis; dimethylallyl diphosphate biosynthesis; dimethylallyl diphosphate from isopentenyl diphosphate: step 1/1. Its function is as follows. Catalyzes the 1,3-allylic rearrangement of the homoallylic substrate isopentenyl (IPP) to its highly electrophilic allylic isomer, dimethylallyl diphosphate (DMAPP). This chain is Isopentenyl-diphosphate Delta-isomerase, found in Nocardia farcinica (strain IFM 10152).